The chain runs to 310 residues: tRNA-dihydrouridine(16) synthase (310 aa).

FMN is bound by residues 7 to 9 (PMQ) and Q68. C98 serves as the catalytic Proton donor. Residues K139, 200–202 (NGE), and 224–225 (GR) contribute to the FMN site.

Belongs to the Dus family. DusC subfamily. The cofactor is FMN.

It catalyses the reaction 5,6-dihydrouridine(16) in tRNA + NADP(+) = uridine(16) in tRNA + NADPH + H(+). The enzyme catalyses 5,6-dihydrouridine(16) in tRNA + NAD(+) = uridine(16) in tRNA + NADH + H(+). Functionally, catalyzes the synthesis of 5,6-dihydrouridine (D), a modified base found in the D-loop of most tRNAs, via the reduction of the C5-C6 double bond in target uridines. Specifically modifies U16 in tRNAs. In Haemophilus influenzae (strain ATCC 51907 / DSM 11121 / KW20 / Rd), this protein is tRNA-dihydrouridine(16) synthase.